The primary structure comprises 275 residues: tRNA pseudouridine synthase B (275 aa).

The Nucleophile role is filled by Asp38.

Belongs to the pseudouridine synthase TruB family. Type 1 subfamily.

The enzyme catalyses uridine(55) in tRNA = pseudouridine(55) in tRNA. In terms of biological role, responsible for synthesis of pseudouridine from uracil-55 in the psi GC loop of transfer RNAs. The polypeptide is tRNA pseudouridine synthase B (Nitratiruptor sp. (strain SB155-2)).